The chain runs to 389 residues: 8-amino-7-oxononanoate synthase (389 aa).

Substrate is bound at residue R19. G106 to Y107 is a binding site for pyridoxal 5'-phosphate. H131 is a binding site for substrate. Pyridoxal 5'-phosphate is bound by residues S176, H204, and T233. N6-(pyridoxal phosphate)lysine is present on K236. T350 lines the substrate pocket.

This sequence belongs to the class-II pyridoxal-phosphate-dependent aminotransferase family. BioF subfamily. In terms of assembly, homodimer. Requires pyridoxal 5'-phosphate as cofactor.

The catalysed reaction is 6-carboxyhexanoyl-[ACP] + L-alanine + H(+) = (8S)-8-amino-7-oxononanoate + holo-[ACP] + CO2. It participates in cofactor biosynthesis; biotin biosynthesis. In terms of biological role, catalyzes the decarboxylative condensation of pimeloyl-[acyl-carrier protein] and L-alanine to produce 8-amino-7-oxononanoate (AON), [acyl-carrier protein], and carbon dioxide. In Ectopseudomonas mendocina (strain ymp) (Pseudomonas mendocina), this protein is 8-amino-7-oxononanoate synthase.